Here is a 214-residue protein sequence, read N- to C-terminus: Anti-sigma-F factor NrsF (214 aa).

At Met-1–Arg-25 the chain is on the cytoplasmic side. Residues Leu-26 to Gln-46 traverse the membrane as a helical segment. Residues Ala-47–Gln-53 lie on the Periplasmic side of the membrane. Residues Ala-54–Gly-74 traverse the membrane as a helical segment. At Tyr-75 to Arg-90 the chain is on the cytoplasmic side. The chain crosses the membrane as a helical span at residues Gly-91–Ile-111. Residues Thr-112–Arg-134 are Periplasmic-facing. The helical transmembrane segment at Ile-135 to Pro-155 threads the bilayer. Over Thr-156–Pro-158 the chain is Cytoplasmic. A helical transmembrane segment spans residues Gly-159–Leu-179. The Periplasmic segment spans residues His-180–Thr-185. Residues Phe-186 to Trp-206 form a helical membrane-spanning segment. Residues Ala-207 to Trp-214 lie on the Cytoplasmic side of the membrane.

Belongs to the NrsF anti-sigma-F factor family.

It localises to the cell inner membrane. Its function is as follows. An anti-sigma factor for extracytoplasmic function (ECF) sigma factor sigma-F (SigF), which responds to chromate and cadmium. Overexpression leads to loss of response to dichromate. ECF sigma factors are held in an inactive form by a cognate anti-sigma factor. The sequence is that of Anti-sigma-F factor NrsF from Caulobacter vibrioides (strain NA1000 / CB15N) (Caulobacter crescentus).